Here is a 338-residue protein sequence, read N- to C-terminus: mRNA decay activator protein ZFP36L1 (338 aa).

Positions 1–111 (MTTTLVSATI…QKQPGSGQVN (111 aa)) are necessary and sufficient for the association with mRNA decay enzymes and mRNA decay activation. Serine 54 is modified (phosphoserine; by MAPKAPK2). The interval 71 to 113 (LKGEPAPSLSSRDSRFRDRSFSEGGERLLPTQKQPGSGQVNSS) is disordered. Basic and acidic residues predominate over residues 82–96 (RDSRFRDRSFSEGGE). Position 90 is a phosphoserine; by PKB/AKT1 (serine 90). Serine 92 carries the phosphoserine; by PKB/AKT1 and MAPKAPK2 modification. Positions 101 to 113 (TQKQPGSGQVNSS) are enriched in polar residues. 2 C3H1-type zinc fingers span residues 114–142 (RYKT…HGIH) and 152–180 (KYKT…HNAE). The segment at 185–338 (LAGGRDLSAD…IFSRLSISDD (154 aa)) is necessary for mRNA decay activation. Residue serine 203 is modified to Phosphoserine; by PKB/AKT1 and MAPKAPK2. Positions 273–338 (SPTTFLFRPM…IFSRLSISDD (66 aa)) are disordered. Low complexity predominate over residues 305-318 (YLSSSSSSHSGSDS). Serine 318 bears the Phosphoserine mark. Serine 334 is subject to Phosphoserine; by RPS6KA1.

In terms of assembly, associates with the cytoplasmic CCR4-NOT deadenylase and RNA exosome complexes to trigger ARE-containing mRNA deadenylation and decay processes. Interacts with CNOT1. Interacts (via N-terminus) with CNOT6. Interacts with CNOT7; this interaction is inhibited in response to phorbol 12-myristate 13-acetate (PMA) treatment in a p38 MAPK-dependent manner. Interacts with DCP1A. Interacts (via N-terminus) with DCP2. Interacts (via N-terminus) with EXOSC2. Interacts with XRN1. Interacts (via phosphorylated form) with YWHAB; this interaction occurs in a protein kinase AKT1-dependent manner. Interacts (via phosphorylated form) with YWHAZ; this interaction occurs in a p38 MAPK- and AKT-signaling pathways. In terms of processing, phosphorylated. Phosphorylated by RPS6KA1 at Ser-334 upon phorbol 12-myristate 13-acetate (PMA) treatment; this phosphorylation results in dissociation of the CCR4-NOT deadenylase complex and induces p38 MAPK-mediated stabilization of the low-density lipoprotein receptor LDLR mRNA. Phosphorylated by protein kinase AKT1 at Ser-92 and Ser-203 in response to insulin; these phosphorylations stabilize ZFP36L1, increase the association with 14-3-3 proteins and mediate ARE-containing mRNA stabilization. AKT1-mediated phosphorylation at Ser-92 does not impair ARE-containing RNA-binding. Phosphorylated at Ser-54, Ser-92 and Ser-203 by MAPKAPK2; these phosphorylations increase the association with 14-3-3 proteins and mediate ARE-containing mRNA stabilization in a protein kinase AKT1-independent manner. MAPKAPK2-mediated phosphorylations at Ser-54, Ser-92 and Ser-203 do not impair ARE-containing RNA-binding. Phosphorylations increase the association with 14-3-3 proteins and mediate ARE-containing mRNA stabilization during early adipogenesis in a p38 MAPK- and AKT-dependent manner. Ubiquitinated. Ubiquitination leads to proteasomal degradation, a process inhibited by phosphorylations at Ser-90, Ser-92 and Ser-203. As to expression, expressed in preadipocytes and adipocytes. Expressed in the proximal and distal tubules in the renal cortex (at protein level). Expressed in ovary, heart, kidney, lung, spleen and thymus. Weakly expressed in brain, liver and testis. Expressed in osteoblasts. Expressed in embryonic stem cells (ESCs). Expressed through B lymphocyte development.

It localises to the nucleus. The protein resides in the cytoplasm. Its subcellular location is the cytoplasmic granule. The protein localises to the P-body. In terms of biological role, zinc-finger RNA-binding protein that destabilizes several cytoplasmic AU-rich element (ARE)-containing mRNA transcripts by promoting their poly(A) tail removal or deadenylation, and hence provide a mechanism for attenuating protein synthesis. Acts as a 3'-untranslated region (UTR) ARE mRNA-binding adapter protein to communicate signaling events to the mRNA decay machinery. Functions by recruiting the CCR4-NOT deadenylating complex and components of the cytoplasmic RNA decay machinery to the bound ARE-containing mRNAs, and hence promotes ARE-mediated mRNA deadenylation and decay processes. Also induces the degradation of ARE-containing mRNAs even in absence of poly(A) tail. Binds to 3'-UTR ARE of numerous mRNAs. Positively regulates early adipogenesis by promoting ARE-mediated mRNA decay of immediate early genes (IEGs). Promotes ARE-mediated mRNA decay of mineralocorticoid receptor NR3C2 mRNA in response to hypertonic stress. Negatively regulates hematopoietic/erythroid cell differentiation by promoting ARE-mediated mRNA decay of the transcription factor STAT5B mRNA. Positively regulates monocyte/macrophage cell differentiation by promoting ARE-mediated mRNA decay of the cyclin-dependent kinase CDK6 mRNA. Promotes degradation of ARE-containing pluripotency-associated mRNAs in embryonic stem cells (ESCs), such as NANOG, through a fibroblast growth factor (FGF)-induced MAPK-dependent signaling pathway, and hence attenuates ESC self-renewal and positively regulates mesendoderm differentiation. May play a role in mediating pro-apoptotic effects in malignant B-cells by promoting ARE-mediated mRNA decay of BCL2 mRNA. In association with ZFP36L2 maintains quiescence on developing B lymphocytes by promoting ARE-mediated decay of several mRNAs encoding cell cycle regulators that help B cells progress through the cell cycle, and hence ensuring accurate variable-diversity-joining (VDJ) recombination and functional immune cell formation. Together with ZFP36L2 is also necessary for thymocyte development and prevention of T-cell acute lymphoblastic leukemia (T-ALL) transformation by promoting ARE-mediated mRNA decay of the oncogenic transcription factor NOTCH1 mRNA. Involved in the delivery of target ARE-mRNAs to processing bodies (PBs). In addition to its cytosolic mRNA-decay function, plays a role in the regulation of nuclear mRNA 3'-end processing; modulates mRNA 3'-end maturation efficiency of the DLL4 mRNA through binding with an ARE embedded in a weak noncanonical polyadenylation (poly(A)) signal in endothelial cells. Also involved in the regulation of stress granule (SG) and P-body (PB) formation and fusion. Plays a role in vasculogenesis and endocardial development. Involved in the regulation of keratinocyte proliferation, differentiation and apoptosis. Plays a role in myoblast cell differentiation. The polypeptide is mRNA decay activator protein ZFP36L1 (Mus musculus (Mouse)).